The primary structure comprises 88 residues: Small ribosomal subunit protein bS20 (88 aa).

Residues 1 to 20 (MANHKSAEKRARQTIKRTER) are disordered.

Belongs to the bacterial ribosomal protein bS20 family.

Functionally, binds directly to 16S ribosomal RNA. This is Small ribosomal subunit protein bS20 from Campylobacter fetus subsp. fetus (strain 82-40).